The following is a 382-amino-acid chain: D-galactonate dehydratase 1 (382 aa).

Mg(2+) is bound at residue Asp183. The Proton donor role is filled by His185. Mg(2+)-binding residues include Glu209 and Glu235. The active-site Proton acceptor is His285.

The protein belongs to the mandelate racemase/muconate lactonizing enzyme family. GalD subfamily. It depends on Mg(2+) as a cofactor.

The catalysed reaction is D-galactonate = 2-dehydro-3-deoxy-D-galactonate + H2O. It participates in carbohydrate acid metabolism; D-galactonate degradation; D-glyceraldehyde 3-phosphate and pyruvate from D-galactonate: step 1/3. Functionally, catalyzes the dehydration of D-galactonate to 2-keto-3-deoxy-D-galactonate. This chain is D-galactonate dehydratase 1, found in Escherichia coli (strain SMS-3-5 / SECEC).